The primary structure comprises 679 residues: Leucine-rich repeat, immunoglobulin-like domain and transmembrane domain-containing protein 3 (679 aa).

A signal peptide spans 1–19; it reads MHLFACLCIVLSFLEGVGC. Topologically, residues 20–582 are lumenal; the sequence is LCPSQCTCDY…RVEGDDSQWS (563 aa). 5 LRR repeats span residues 56–79, 80–103, 104–128, 129–151, and 152–175; these read PVDT…AFYY, LVEL…SFYN, LKQL…LLDM, PLLR…ALRY, and LKNL…FLES. Positions 201–253 constitute an LRRCT domain; that stretch reads NPWFCDCHISKMIELSKVVDPAIVLLDPLMTCSEPERLTGILFQRAELEHCLK. The Ig-like domain maps to 254–344; that stretch reads PSVMTSATKI…GMSEAVVTVT (91 aa). An intrachain disulfide couples Cys-275 to Cys-328. Residue Asn-296 is glycosylated (N-linked (GlcNAc...) asparagine). The tract at residues 351 to 375 is disordered; that stretch reads TPIPPDTSERTGDHPEWDVQPGSGR. A compositionally biased stretch (basic and acidic residues) spans 357 to 367; it reads TSERTGDHPEW. The 89-residue stretch at 486 to 574 folds into the Fibronectin type-III domain; it reads AIENLRVVSE…QCITFSTERV (89 aa). The chain crosses the membrane as a helical span at residues 583–603; it reads LLLVVTSTACVVILPLICFLL. Over 604–679 the chain is Cytoplasmic; it reads YKVCKLQCKS…SEGSRPEYYC (76 aa).

In terms of processing, glycosylated. In terms of tissue distribution, detected in the outer plexiform layer (OPL) of the retina where it localizes to ON-bipolar cells (at protein level).

It is found in the cell projection. Its subcellular location is the dendrite. The protein localises to the perikaryon. It localises to the endoplasmic reticulum membrane. In terms of biological role, plays a role in the synapse formation and synaptic transmission between cone photoreceptor cells and retinal bipolar cells. Required for normal transmission of a light-evoked stimulus from the cone photoreceptor cells to the ON-bipolar cells and ON-ganglion cells in the inner retina. Required in retinal ON-bipolar cells for normal localization of the cation channel TRPM1 at dendrite tips. Seems to play a specific role in synaptic contacts made by ON-bipolar cells with cone photoreceptor pedicles. May also have a role in cone synapse formation. Might facilitate FGFR1 exit from the endoplasmic reticulum to the Golgi. Could be a regulator of the FGFRs. This chain is Leucine-rich repeat, immunoglobulin-like domain and transmembrane domain-containing protein 3 (LRIT3), found in Homo sapiens (Human).